The following is a 189-amino-acid chain: GTP cyclohydrolase 1 (189 aa).

Residues Cys-80, His-83, and Cys-152 each coordinate Zn(2+).

This sequence belongs to the GTP cyclohydrolase I family. In terms of assembly, toroid-shaped homodecamer, composed of two pentamers of five dimers.

The catalysed reaction is GTP + H2O = 7,8-dihydroneopterin 3'-triphosphate + formate + H(+). It functions in the pathway cofactor biosynthesis; 7,8-dihydroneopterin triphosphate biosynthesis; 7,8-dihydroneopterin triphosphate from GTP: step 1/1. This Latilactobacillus sakei subsp. sakei (strain 23K) (Lactobacillus sakei subsp. sakei) protein is GTP cyclohydrolase 1.